The following is a 407-amino-acid chain: MDSKRKNQELSTSETADPSLSKTNKKQKIDMQEAMKNQNEVSLLLVGKVISAVAKNSNCVFSPASINAVLTVTAANTDNKTLRSFILSFLKSSSTEETNAIFHELASVVFKDGSETGGPKIAAVNGVWMEQSLSCNPDWEDLFLNFFKASFAKVDFRHKAEEVRLDVNTWASRHTNDLIKEILPRGSVTSLTNWIYGNALYFKGAWEKAFDKSMTRDKPFHLLNGKSVSVPFMRSYEKQFIEAYDGFKVLRLPYRQGRDDTNREFSMYLYLPDKKGELDNLLERITSNPGFLDSHIPEYRVDVGDFRIPKFKIEFGFEASSVFNDFELNVSLHQKALIEIDEEGTEAAAATTVVVVTGSCLWEPKKKIDFVADHPFLFLIREDKTGTLLFAGQIFDPSELSSALDRA.

Positions 1–28 (MDSKRKNQELSTSETADPSLSKTNKKQK) are disordered. Residues 9-22 (ELSTSETADPSLSK) are compositionally biased toward polar residues. Residues 344-368 (GTEAAAATTVVVVTGSCLWEPKKKI) form an RCL region.

This sequence belongs to the serpin family.

Probable serine protease inhibitor. This chain is Serpin-Z2, found in Arabidopsis thaliana (Mouse-ear cress).